Here is a 398-residue protein sequence, read N- to C-terminus: Selection and upkeep of intraepithelial T-cells protein 8 (398 aa).

The first 25 residues, 1–25 (MMKPEFSHFFGFCVYFLFLQVMASS), serve as a signal peptide directing secretion. In terms of domain architecture, Ig-like V-type spans 26–141 (EKLRVTTPTR…DVAIMNLNVT (116 aa)). Topologically, residues 26–244 (EKLRVTTPTR…ANELFNQDYL (219 aa)) are extracellular. Cysteines 49 and 123 form a disulfide. N-linked (GlcNAc...) asparagine glycosylation is found at Asn92 and Asn139. The Ig-like C1-type domain occupies 142–233 (AVGLETEIHV…TGEEKQTSII (92 aa)). Cys163 and Cys217 are disulfide-bonded. Residues 245 to 265 (WVGIFPFSVLSLILFGVLPFI) traverse the membrane as a helical segment. Residues 266–288 (NSFFRSQGCASGCLSKCLPVVTS) lie on the Cytoplasmic side of the membrane. Residues 289-309 (WPVQIVHFLVCSGVLFAVYLP) form a helical membrane-spanning segment. The Extracellular segment spans residues 310–331 (HRYRVSLSDPQFPLYNNWITEL). The helical transmembrane segment at 332–352 (LIVILFLTICFVLPITVLLLI) threads the bilayer. At 353–398 (KLSPTCLAKWEKNKDDIMDSQLGLGKAREASTLYEEQSRKSWEQEK) the chain is on the cytoplasmic side.

It belongs to the SKINT family. Expressed in skin, thymus, testis and, to a lower extent, bladder, brain, heart, kidney, mammary gland, small intestine and uterus.

Its subcellular location is the membrane. Functionally, may act by engaging a cell surface molecule on immature T-cells in the embryonic thymus. The polypeptide is Selection and upkeep of intraepithelial T-cells protein 8 (Skint8) (Mus musculus (Mouse)).